Here is a 555-residue protein sequence, read N- to C-terminus: Formate--tetrahydrofolate ligase (555 aa).

Residue 64 to 71 participates in ATP binding; sequence TKAGIGKT.

The protein belongs to the formate--tetrahydrofolate ligase family.

The enzyme catalyses (6S)-5,6,7,8-tetrahydrofolate + formate + ATP = (6R)-10-formyltetrahydrofolate + ADP + phosphate. The protein operates within one-carbon metabolism; tetrahydrofolate interconversion. The protein is Formate--tetrahydrofolate ligase of Phocaeicola vulgatus (strain ATCC 8482 / DSM 1447 / JCM 5826 / CCUG 4940 / NBRC 14291 / NCTC 11154) (Bacteroides vulgatus).